We begin with the raw amino-acid sequence, 1807 residues long: Integrin beta-4 (1807 aa).

A signal peptide spans 1-27; sequence MAGLCSSPWVKLLLAVVLSAGLPGNMA. The Extracellular segment spans residues 28-713; sequence NRCKKAQVKS…KKKDCLPAPS (686 aa). The region spanning 29–73 is the PSI domain; it reads RCKKAQVKSCTECIRVDKSCAYCTDELFKERRCNTQADVLAAGCR. 8 cysteine pairs are disulfide-bonded: Cys30/Cys48, Cys38/Cys456, Cys41/Cys61, Cys51/Cys72, Cys245/Cys288, Cys458/Cys477, Cys469/Cys480, and Cys482/Cys491. Residues 131–340 form the VWFA domain; the sequence is DLYILMDFSN…SYYEKLHKYF (210 aa). Residues Ser139 and Ser141 each coordinate Mg(2+). Ser141, Asp144, Asp145, and Asp176 together coordinate Ca(2+). Positions 194–199 are involved in NRG1- and IGF1-binding; it reads WPNSDP. The Ca(2+) site is built by Asn228, Asp230, Pro232, and Glu233. Glu233 provides a ligand contact to Mg(2+). N-linked (GlcNAc...) asparagine glycosylation is present at Asn327. Residue Glu350 participates in Ca(2+) binding. I-EGF domains follow at residues 458 to 492, 493 to 538, 539 to 575, and 576 to 617; these read CELQKEVQSARCHYRGDFMCGHCVCNEGWSGKTCN, CSTG…HFCE, YDNFQCPRTSGFLCNDRGRCSMGECVCEPGWTGRSCD, and CPLS…TTCE. N-linked (GlcNAc...) asparagine glycosylation is present at Asn492. 11 cysteine pairs are disulfide-bonded: Cys493/Cys521, Cys504/Cys519, Cys513/Cys524, Cys526/Cys537, Cys544/Cys558, Cys552/Cys563, Cys565/Cys574, Cys576/Cys599, Cys583/Cys597, Cys591/Cys602, and Cys604/Cys616. N-linked (GlcNAc...) asparagine glycosylation occurs at Asn580. Asn619 is a glycosylation site (N-linked (GlcNAc...) asparagine). Disulfide bonds link Cys628-Cys673, Cys634-Cys653, Cys637-Cys650, and Cys682-Cys708. N-linked (GlcNAc...) asparagine glycosylation is present at Asn697. The helical transmembrane segment at 714-734 threads the bilayer; sequence WWLIPLLIFLLLLLVLLLLLC. A palmitoylated on several cysteines region spans residues 734–751; it reads CWKYCACCKACLGLLPCC. Topologically, residues 735 to 1807 are cytoplasmic; the sequence is WKYCACCKAC…THMDQQFFQT (1073 aa). Phosphoserine is present on residues Ser773, Ser1071, and Ser1121. In terms of domain architecture, Calx-beta spans 981 to 1086; that stretch reads VNITIIKEQA…QVRRFQVQLS (106 aa). A disordered region spans residues 1119–1141; sequence SASPPLPRGDLGAPQNPNAKAAG. 2 Fibronectin type-III domains span residues 1131 to 1220 and 1224 to 1323; these read APQN…THQE and EPGR…TQPK. A phosphoserine mark is found at Ser1386, Ser1389, and Ser1405. Thr1418 bears the Phosphothreonine mark. Ser1425 is modified (phosphoserine). A Phosphothreonine modification is found at Thr1514. Fibronectin type-III domains are found at residues 1514–1609 and 1627–1723; these read TPTR…VHPQ and APGP…SQDG. Position 1776 is a phosphoserine (Ser1776).

Belongs to the integrin beta chain family. In terms of assembly, heterodimer of an alpha and a beta subunit. Beta-4 associates with alpha-6. Interacts (via cytoplasmic region) with COL17A1 (via cytoplasmic region). Interacts (via cytoplasmic region) with DST isoform 3 (via N-terminus). Interacts (via cytoplasmic domain) with DST (via N-terminus). Interacts with RAC1. ITGA6:ITGB4 is found in a ternary complex with NRG1 and ERBB3. ITGA6:ITGB4 is found in a ternary complex with IGF1 and IGF1R. ITGA6:ITGB4 interacts with IGF2. Interacts with TMEM268; this interaction prevents ITGB4 degradation. In terms of processing, palmitoylated by DHHC3 at several cysteines of the membrane-proximal region, enhancing stability and cell surface expression. Palmitoylation also promotes secondary association with tertaspanins.

The protein localises to the cell membrane. Its subcellular location is the cell junction. It is found in the hemidesmosome. Its function is as follows. Integrin alpha-6/beta-4 is a receptor for laminin. It plays a critical structural role in the hemidesmosome of epithelial cells. Is required for the regulation of keratinocyte polarity and motility. ITGA6:ITGB4 binds to NRG1 (via EGF domain) and this binding is essential for NRG1-ERBB signaling. ITGA6:ITGB4 binds to IGF1 and this binding is essential for IGF1 signaling. ITGA6:ITGB4 binds to IGF2 and this binding is essential for IGF2 signaling. The sequence is that of Integrin beta-4 (Itgb4) from Rattus norvegicus (Rat).